Reading from the N-terminus, the 207-residue chain is Probable molybdenum cofactor guanylyltransferase (207 aa).

Residues 9-11 (LAG), lysine 21, and aspartate 97 contribute to the GTP site. Position 97 (aspartate 97) interacts with Mg(2+).

Belongs to the MobA family. Mg(2+) is required as a cofactor.

It is found in the cytoplasm. The catalysed reaction is Mo-molybdopterin + GTP + H(+) = Mo-molybdopterin guanine dinucleotide + diphosphate. Functionally, transfers a GMP moiety from GTP to Mo-molybdopterin (Mo-MPT) cofactor (Moco or molybdenum cofactor) to form Mo-molybdopterin guanine dinucleotide (Mo-MGD) cofactor. The chain is Probable molybdenum cofactor guanylyltransferase from Trichormus variabilis (strain ATCC 29413 / PCC 7937) (Anabaena variabilis).